The primary structure comprises 484 residues: tRNA sulfurtransferase (484 aa).

The region spanning 56–158 is the THUMP domain; that stretch reads NCLKKALSKV…GNRAYFYTEV (103 aa). Residues 176-177, lysine 257, glycine 279, and glutamine 288 each bind ATP; that span reads LV. An intrachain disulfide couples cysteine 336 to cysteine 444. The Rhodanese domain maps to 396-479; that stretch reads APEGAVIVDL…TRNAVPPSSQ (84 aa). Cysteine 444 acts as the Cysteine persulfide intermediate in catalysis.

It belongs to the ThiI family.

The protein localises to the cytoplasm. It carries out the reaction [ThiI sulfur-carrier protein]-S-sulfanyl-L-cysteine + a uridine in tRNA + 2 reduced [2Fe-2S]-[ferredoxin] + ATP + H(+) = [ThiI sulfur-carrier protein]-L-cysteine + a 4-thiouridine in tRNA + 2 oxidized [2Fe-2S]-[ferredoxin] + AMP + diphosphate. The catalysed reaction is [ThiS sulfur-carrier protein]-C-terminal Gly-Gly-AMP + S-sulfanyl-L-cysteinyl-[cysteine desulfurase] + AH2 = [ThiS sulfur-carrier protein]-C-terminal-Gly-aminoethanethioate + L-cysteinyl-[cysteine desulfurase] + A + AMP + 2 H(+). It functions in the pathway cofactor biosynthesis; thiamine diphosphate biosynthesis. Its function is as follows. Catalyzes the ATP-dependent transfer of a sulfur to tRNA to produce 4-thiouridine in position 8 of tRNAs, which functions as a near-UV photosensor. Also catalyzes the transfer of sulfur to the sulfur carrier protein ThiS, forming ThiS-thiocarboxylate. This is a step in the synthesis of thiazole, in the thiamine biosynthesis pathway. The sulfur is donated as persulfide by IscS. The sequence is that of tRNA sulfurtransferase from Pyrobaculum aerophilum (strain ATCC 51768 / DSM 7523 / JCM 9630 / CIP 104966 / NBRC 100827 / IM2).